Here is a 1183-residue protein sequence, read N- to C-terminus: DNA-directed RNA polymerase subunit beta (1183 aa).

The segment at alanine 1155 to aspartate 1183 is disordered.

This sequence belongs to the RNA polymerase beta chain family. As to quaternary structure, the RNAP catalytic core consists of 2 alpha, 1 beta, 1 beta' and 1 omega subunit. When a sigma factor is associated with the core the holoenzyme is formed, which can initiate transcription.

It carries out the reaction RNA(n) + a ribonucleoside 5'-triphosphate = RNA(n+1) + diphosphate. In terms of biological role, DNA-dependent RNA polymerase catalyzes the transcription of DNA into RNA using the four ribonucleoside triphosphates as substrates. In Staphylococcus carnosus (strain TM300), this protein is DNA-directed RNA polymerase subunit beta.